A 459-amino-acid polypeptide reads, in one-letter code: MTMHVEVGPDSTAPPHSSGIKVIIIGLGIGGLAAAIECHRKGHSVIAFDKAQELKPVGDGIALAHNAVRVIEKWGKGTVGQELGRLSSRLNTTVIYDQTGRFIAEDKLDGFKAGEGHLLPRGELSQVMYKHAKSLGIDMRLASEVDEYWEDENSAGVIVDGEKITADCVVACDGVNSKARRHIIGYEPELRSSGSCVFRGWMTTEEPLVGSHWLLSHTDQADQVKVFAGDGVHVLLSTIQHGKMVFWLCTHKDNDCYDRKKEAPPTPEVDGMIHLIRDWPMRGQIESTIRKTLAKNVMHYPLLIREALSNWRSKGGRMVIIGDAAHPFLPVSGQGAAQAIEDAAVLAITLHLAGKEEVPLALHALEKIRLPRTALLQRSSLELERFWLNIDWPEVEKCPELLTIPRPKWIHGHDCQTHAYTEFAKVVSAIQMREEYHPLGGPRDSTNGESLLALLRQDT.

FAD contacts are provided by Asp49, Ala62, and Arg121. Arg199 is a catalytic residue. FAD-binding residues include Asp323 and Ala336.

This sequence belongs to the paxM FAD-dependent monooxygenase family. FAD serves as cofactor.

It carries out the reaction asperlicin C + NADPH + O2 + H(+) = asperlicin E + NADP(+) + H2O. It catalyses the reaction asperlicin C + NADH + O2 + H(+) = asperlicin E + NAD(+) + H2O. In terms of biological role, catalyzes the conversion of asperlicin A to form asperlicin E, a potent cholecystokinin receptor CCK(A) antagonist. The protein is Asperlicin C monooxygenase of Petromyces alliaceus (Aspergillus alliaceus).